Reading from the N-terminus, the 391-residue chain is 12-oxophytodienoate reductase 3 (391 aa).

Met-1 is subject to N-acetylmethionine. An N-acetylthreonine; in 12-oxophytodienoate reductase 3, N-terminally processed modification is found at Thr-2. FMN-binding positions include 31-33, Gly-64, and Gln-106; that span reads PMT. His-186 provides a ligand contact to substrate. Tyr-191 serves as the catalytic Proton donor. Arg-238 contributes to the FMN binding site. Arg-284 lines the substrate pocket. Residues 320–322 and 343–344 each bind FMN; these read SGG and GR. The Microbody targeting signal motif lies at 389–391; that stretch reads SRL.

It belongs to the NADH:flavin oxidoreductase/NADH oxidase family. It depends on FMN as a cofactor. Expressed in green seedling, leaves, flowers (anthers, pistil, petal and stamen), and to a lower extent in roots and siliques. Specifically expressed in filament during anther dehiscence initiation.

It localises to the peroxisome. The catalysed reaction is (1S,2S)-OPC-8 + NADP(+) = (9S,13S,15Z)-12-oxophyto-10,15-dienoate + NADPH + H(+). It participates in lipid metabolism; oxylipin biosynthesis. Its function is as follows. Specifically cleaves olefinic bonds in cyclic enones. Involved in the biosynthesis of jasmonic acid (JA) and perhaps in biosynthesis or metabolism of other oxylipin signaling moleclules. Required for the spatial and temporal regulation of JA levels during dehiscence of anthers, promoting the stomium degeneration program. In vitro, reduces 9S,13S-12-oxophytodienoic acid (9S,13S-OPDA) and 9R,13R-OPDA to 9S,13S-OPC-8:0 and 9R,13R-OPC-8:0, respectively. Can detoxify the explosive 2,4,6-trinitrotoluene (TNT) in vitro by catalyzing its nitroreduction to form hydroxylamino-dinitrotoluene (HADNT). The chain is 12-oxophytodienoate reductase 3 from Arabidopsis thaliana (Mouse-ear cress).